Here is a 331-residue protein sequence, read N- to C-terminus: Anthranilate phosphoribosyltransferase (331 aa).

Residues Gly79, 82–83 (GD), Ser87, 89–92 (NIST), 107–115 (KHCNTSISS), and Ser119 each bind 5-phospho-alpha-D-ribose 1-diphosphate. Position 79 (Gly79) interacts with anthranilate. Ser91 lines the Mg(2+) pocket. Asn110 serves as a coordination point for anthranilate. Arg165 contributes to the anthranilate binding site. Mg(2+) is bound by residues Asp223 and Glu224.

Belongs to the anthranilate phosphoribosyltransferase family. As to quaternary structure, homodimer. The cofactor is Mg(2+).

It catalyses the reaction N-(5-phospho-beta-D-ribosyl)anthranilate + diphosphate = 5-phospho-alpha-D-ribose 1-diphosphate + anthranilate. Its pathway is amino-acid biosynthesis; L-tryptophan biosynthesis; L-tryptophan from chorismate: step 2/5. Catalyzes the transfer of the phosphoribosyl group of 5-phosphorylribose-1-pyrophosphate (PRPP) to anthranilate to yield N-(5'-phosphoribosyl)-anthranilate (PRA). This Buchnera aphidicola subsp. Schlechtendalia chinensis protein is Anthranilate phosphoribosyltransferase.